A 484-amino-acid chain; its full sequence is Aspartyl aminopeptidase (484 aa).

Methionine 1 bears the N-acetylmethionine mark. Residue histidine 84 coordinates Zn(2+). A substrate-binding site is contributed by histidine 159. Over residues 188 to 206 the composition is skewed to low complexity; that stretch reads PVESKSTTTTTTTESPKTS. The tract at residues 188–213 is disordered; sequence PVESKSTTTTTTTESPKTSDPQDVNS. Aspartate 266 serves as a coordination point for Zn(2+). A substrate-binding site is contributed by glutamate 301. Glutamate 302 and aspartate 354 together coordinate Zn(2+). Substrate contacts are provided by aspartate 354, histidine 357, lysine 382, and tyrosine 389. Zn(2+) is bound at residue histidine 448.

The protein belongs to the peptidase M18 family. In terms of assembly, tetrahedron-shaped homododecamer built from six homodimers. The cofactor is Zn(2+).

Its subcellular location is the cytoplasm. The enzyme catalyses Release of an N-terminal aspartate or glutamate from a peptide, with a preference for aspartate.. Functionally, likely to play an important role in intracellular protein and peptide metabolism. The polypeptide is Aspartyl aminopeptidase (dnpep) (Dictyostelium discoideum (Social amoeba)).